A 347-amino-acid chain; its full sequence is D-alanine--D-alanine ligase (347 aa).

The ATP-grasp domain maps to Lys138–Ala339. Residue Ser171–Phe226 participates in ATP binding. Mg(2+) contacts are provided by Asp296, Glu308, and Asn310.

This sequence belongs to the D-alanine--D-alanine ligase family. The cofactor is Mg(2+). It depends on Mn(2+) as a cofactor.

The protein resides in the cytoplasm. The catalysed reaction is 2 D-alanine + ATP = D-alanyl-D-alanine + ADP + phosphate + H(+). It participates in cell wall biogenesis; peptidoglycan biosynthesis. Functionally, cell wall formation. The chain is D-alanine--D-alanine ligase from Tropheryma whipplei (strain TW08/27) (Whipple's bacillus).